We begin with the raw amino-acid sequence, 559 residues long: Potassium-transporting ATPase potassium-binding subunit (559 aa).

12 helical membrane passes run G5 to T25, L63 to L83, V131 to L151, I173 to G193, V254 to V274, A282 to E302, F327 to V347, A356 to V376, G379 to G399, M416 to M436, L483 to I503, and A525 to P545.

It belongs to the KdpA family. As to quaternary structure, the system is composed of three essential subunits: KdpA, KdpB and KdpC.

The protein resides in the cell inner membrane. Its function is as follows. Part of the high-affinity ATP-driven potassium transport (or Kdp) system, which catalyzes the hydrolysis of ATP coupled with the electrogenic transport of potassium into the cytoplasm. This subunit binds the periplasmic potassium ions and delivers the ions to the membrane domain of KdpB through an intramembrane tunnel. The chain is Potassium-transporting ATPase potassium-binding subunit from Klebsiella pneumoniae (strain 342).